A 119-amino-acid chain; its full sequence is Large ribosomal subunit protein uL18 (119 aa).

It belongs to the universal ribosomal protein uL18 family. In terms of assembly, part of the 50S ribosomal subunit; part of the 5S rRNA/L5/L18/L25 subcomplex. Contacts the 5S and 23S rRNAs.

In terms of biological role, this is one of the proteins that bind and probably mediate the attachment of the 5S RNA into the large ribosomal subunit, where it forms part of the central protuberance. In Micrococcus luteus (Micrococcus lysodeikticus), this protein is Large ribosomal subunit protein uL18.